The chain runs to 195 residues: Pyridoxal 5'-phosphate synthase subunit PdxT (195 aa).

55–57 (GES) lines the L-glutamine pocket. Cysteine 84 functions as the Nucleophile in the catalytic mechanism. L-glutamine contacts are provided by residues arginine 111 and 139–140 (IR). Active-site charge relay system residues include histidine 175 and glutamate 177.

This sequence belongs to the glutaminase PdxT/SNO family. In the presence of PdxS, forms a dodecamer of heterodimers. Only shows activity in the heterodimer.

The catalysed reaction is aldehydo-D-ribose 5-phosphate + D-glyceraldehyde 3-phosphate + L-glutamine = pyridoxal 5'-phosphate + L-glutamate + phosphate + 3 H2O + H(+). The enzyme catalyses L-glutamine + H2O = L-glutamate + NH4(+). It functions in the pathway cofactor biosynthesis; pyridoxal 5'-phosphate biosynthesis. Catalyzes the hydrolysis of glutamine to glutamate and ammonia as part of the biosynthesis of pyridoxal 5'-phosphate. The resulting ammonia molecule is channeled to the active site of PdxS. The protein is Pyridoxal 5'-phosphate synthase subunit PdxT of Methanosphaerula palustris (strain ATCC BAA-1556 / DSM 19958 / E1-9c).